Here is a 349-residue protein sequence, read N- to C-terminus: Nicotinate-nucleotide--dimethylbenzimidazole phosphoribosyltransferase (349 aa).

The Proton acceptor role is filled by glutamate 318.

This sequence belongs to the CobT family.

The enzyme catalyses 5,6-dimethylbenzimidazole + nicotinate beta-D-ribonucleotide = alpha-ribazole 5'-phosphate + nicotinate + H(+). It functions in the pathway nucleoside biosynthesis; alpha-ribazole biosynthesis; alpha-ribazole from 5,6-dimethylbenzimidazole: step 1/2. Its function is as follows. Catalyzes the synthesis of alpha-ribazole-5'-phosphate from nicotinate mononucleotide (NAMN) and 5,6-dimethylbenzimidazole (DMB). The protein is Nicotinate-nucleotide--dimethylbenzimidazole phosphoribosyltransferase of Geobacter sp. (strain M21).